The chain runs to 323 residues: tRNA U34 carboxymethyltransferase (323 aa).

Carboxy-S-adenosyl-L-methionine is bound by residues Lys91, Trp105, Lys110, Gly130, 152 to 154, 181 to 182, Met196, Tyr200, and Arg315; these read DPS and IE.

Belongs to the class I-like SAM-binding methyltransferase superfamily. CmoB family. As to quaternary structure, homotetramer.

It catalyses the reaction carboxy-S-adenosyl-L-methionine + 5-hydroxyuridine(34) in tRNA = 5-carboxymethoxyuridine(34) in tRNA + S-adenosyl-L-homocysteine + H(+). Its function is as follows. Catalyzes carboxymethyl transfer from carboxy-S-adenosyl-L-methionine (Cx-SAM) to 5-hydroxyuridine (ho5U) to form 5-carboxymethoxyuridine (cmo5U) at position 34 in tRNAs. This is tRNA U34 carboxymethyltransferase from Vibrio campbellii (strain ATCC BAA-1116).